The primary structure comprises 419 residues: 3-isopropylmalate dehydratase large subunit (419 aa).

Residues Cys300, Cys360, and Cys363 each coordinate [4Fe-4S] cluster.

It belongs to the aconitase/IPM isomerase family. LeuC type 2 subfamily. Heterodimer of LeuC and LeuD. The cofactor is [4Fe-4S] cluster.

The enzyme catalyses (2R,3S)-3-isopropylmalate = (2S)-2-isopropylmalate. Its pathway is amino-acid biosynthesis; L-leucine biosynthesis; L-leucine from 3-methyl-2-oxobutanoate: step 2/4. In terms of biological role, catalyzes the isomerization between 2-isopropylmalate and 3-isopropylmalate, via the formation of 2-isopropylmaleate. This chain is 3-isopropylmalate dehydratase large subunit, found in Nitratidesulfovibrio vulgaris (strain ATCC 29579 / DSM 644 / CCUG 34227 / NCIMB 8303 / VKM B-1760 / Hildenborough) (Desulfovibrio vulgaris).